The sequence spans 193 residues: Ribosome maturation factor RimM (193 aa).

Residues 97-172 form the PRC barrel domain; that stretch reads DDEFYLTDLV…LILADPPALV (76 aa). Positions 168–193 are disordered; sequence PPALVGDHEGPEEKGLDENEELGDRD. A compositionally biased stretch (basic and acidic residues) spans 173-193; sequence GDHEGPEEKGLDENEELGDRD.

The protein belongs to the RimM family. As to quaternary structure, binds ribosomal protein uS19.

The protein localises to the cytoplasm. Its function is as follows. An accessory protein needed during the final step in the assembly of 30S ribosomal subunit, possibly for assembly of the head region. Essential for efficient processing of 16S rRNA. May be needed both before and after RbfA during the maturation of 16S rRNA. It has affinity for free ribosomal 30S subunits but not for 70S ribosomes. The chain is Ribosome maturation factor RimM from Caulobacter vibrioides (strain ATCC 19089 / CIP 103742 / CB 15) (Caulobacter crescentus).